A 314-amino-acid polypeptide reads, in one-letter code: tRNA selenocysteine 1-associated protein 1 (314 aa).

RRM domains follow at residues 2–85 (NSLW…RSNY) and 94–173 (FSLF…LASS).

It belongs to the RRM TRSPAP family.

Its subcellular location is the nucleus. The protein resides in the cytoplasm. Involved in the early steps of selenocysteine biosynthesis and tRNA(Sec) charging to the later steps resulting in the cotranslational incorporation of selenocysteine into selenoproteins. This Danio rerio (Zebrafish) protein is tRNA selenocysteine 1-associated protein 1.